We begin with the raw amino-acid sequence, 428 residues long: Adenylosuccinate synthetase (428 aa).

GTP is bound by residues 12 to 18 (GDEGKGK) and 40 to 42 (GHT). Asp-13 serves as the catalytic Proton acceptor. Residues Asp-13 and Gly-40 each coordinate Mg(2+). Residues 13 to 16 (DEGK), 38 to 41 (NAGH), Thr-128, Arg-142, Gln-223, Thr-238, and Arg-302 contribute to the IMP site. His-41 (proton donor) is an active-site residue. Position 298 to 304 (298 to 304 (TTTGRPR)) interacts with substrate. Residues Arg-304, 330–332 (SID), and 412–414 (SVG) each bind GTP.

This sequence belongs to the adenylosuccinate synthetase family. Homodimer. Requires Mg(2+) as cofactor.

It localises to the cytoplasm. The catalysed reaction is IMP + L-aspartate + GTP = N(6)-(1,2-dicarboxyethyl)-AMP + GDP + phosphate + 2 H(+). It functions in the pathway purine metabolism; AMP biosynthesis via de novo pathway; AMP from IMP: step 1/2. Its function is as follows. Plays an important role in the de novo pathway of purine nucleotide biosynthesis. Catalyzes the first committed step in the biosynthesis of AMP from IMP. The chain is Adenylosuccinate synthetase from Geobacillus kaustophilus (strain HTA426).